A 67-amino-acid polypeptide reads, in one-letter code: MFGNLGQAKKYLGQAAKMLIGIPDYDNYVEHMKTNHPDKPYMSYEEFFRERQNARYGGDGKGGMRCC.

To E.coli YbdD.

This is an uncharacterized protein from Escherichia coli O157:H7.